Here is a 412-residue protein sequence, read N- to C-terminus: Argininosuccinate synthase (412 aa).

ATP is bound by residues 16–24 and alanine 44; that span reads AYSGGLDTS. Positions 96 and 101 each coordinate L-citrulline. Position 126 (glycine 126) interacts with ATP. L-aspartate is bound by residues threonine 128, asparagine 132, and aspartate 133. Asparagine 132 provides a ligand contact to L-citrulline. The L-citrulline site is built by arginine 136, serine 185, serine 194, glutamate 270, and tyrosine 282.

The protein belongs to the argininosuccinate synthase family. Type 1 subfamily. Homotetramer.

It is found in the cytoplasm. It catalyses the reaction L-citrulline + L-aspartate + ATP = 2-(N(omega)-L-arginino)succinate + AMP + diphosphate + H(+). Its pathway is amino-acid biosynthesis; L-arginine biosynthesis; L-arginine from L-ornithine and carbamoyl phosphate: step 2/3. This Shewanella baltica (strain OS185) protein is Argininosuccinate synthase.